We begin with the raw amino-acid sequence, 580 residues long: Benzoate--CoA ligase, peroxisomal (580 aa).

Residues 578-580 carry the Microbody targeting signal motif; sequence SRL.

This sequence belongs to the ATP-dependent AMP-binding enzyme family.

It is found in the peroxisome. The catalysed reaction is benzoate + ATP + CoA = benzoyl-CoA + AMP + diphosphate. In terms of biological role, benzoate--CoA ligase involved in benzoyloxyglucosinolate biosynthesis in seeds. Glucosinolates are secondary metabolites involved in pathogen and insect defense of cruciferous plants. In Arabidopsis thaliana (Mouse-ear cress), this protein is Benzoate--CoA ligase, peroxisomal (AAE20).